The following is a 158-amino-acid chain: Transcription elongation factor GreA (158 aa).

Residues Met1–Arg26 adopt a coiled-coil conformation.

This sequence belongs to the GreA/GreB family.

In terms of biological role, necessary for efficient RNA polymerase transcription elongation past template-encoded arresting sites. The arresting sites in DNA have the property of trapping a certain fraction of elongating RNA polymerases that pass through, resulting in locked ternary complexes. Cleavage of the nascent transcript by cleavage factors such as GreA or GreB allows the resumption of elongation from the new 3'terminus. GreA releases sequences of 2 to 3 nucleotides. The protein is Transcription elongation factor GreA of Nitrosococcus oceani (strain ATCC 19707 / BCRC 17464 / JCM 30415 / NCIMB 11848 / C-107).